We begin with the raw amino-acid sequence, 36 residues long: Photosystem II reaction center protein Y (36 aa).

Residues 1-4 (MDTR) are Lumenal-facing. Residues 5–23 (LIVIAAPVLVAASWALFNI) traverse the membrane as a helical segment. The Stromal segment spans residues 24-36 (GRLAIQQIQRLKR).

The protein belongs to the PsbY family. PSII is composed of 1 copy each of membrane proteins PsbA, PsbB, PsbC, PsbD, PsbE, PsbF, PsbH, PsbI, PsbJ, PsbK, PsbL, PsbM, PsbT, PsbX, PsbY, PsbZ, Psb30/Ycf12, at least 3 peripheral proteins of the oxygen-evolving complex and a large number of cofactors. It forms dimeric complexes.

Its subcellular location is the plastid. It is found in the chloroplast thylakoid membrane. Loosely associated component of the core of photosystem II (PSII), it is not always seen in crystals. PSII is a light-driven water plastoquinone oxidoreductase, using light energy to abstract electrons from H(2)O, generating a proton gradient subsequently used for ATP formation. The polypeptide is Photosystem II reaction center protein Y (Phaeodactylum tricornutum (strain CCAP 1055/1)).